Consider the following 1343-residue polypeptide: DNA-directed RNA polymerase subunit beta (1343 aa).

This sequence belongs to the RNA polymerase beta chain family. The RNAP catalytic core consists of 2 alpha, 1 beta, 1 beta' and 1 omega subunit. When a sigma factor is associated with the core the holoenzyme is formed, which can initiate transcription.

The catalysed reaction is RNA(n) + a ribonucleoside 5'-triphosphate = RNA(n+1) + diphosphate. Its function is as follows. DNA-dependent RNA polymerase catalyzes the transcription of DNA into RNA using the four ribonucleoside triphosphates as substrates. In Haemophilus influenzae (strain 86-028NP), this protein is DNA-directed RNA polymerase subunit beta.